Reading from the N-terminus, the 491-residue chain is Glutamate--tRNA ligase (491 aa).

Positions 13-23 (PSPTGFLHIGN) match the 'HIGH' region motif. The Zn(2+) site is built by C110, C112, C137, and H139. The short motif at 254-258 (KLSKR) is the 'KMSKS' region element. K257 lines the ATP pocket.

The protein belongs to the class-I aminoacyl-tRNA synthetase family. Glutamate--tRNA ligase type 1 subfamily. As to quaternary structure, monomer. Zn(2+) is required as a cofactor.

It is found in the cytoplasm. It carries out the reaction tRNA(Glu) + L-glutamate + ATP = L-glutamyl-tRNA(Glu) + AMP + diphosphate. Catalyzes the attachment of glutamate to tRNA(Glu) in a two-step reaction: glutamate is first activated by ATP to form Glu-AMP and then transferred to the acceptor end of tRNA(Glu). This Listeria innocua serovar 6a (strain ATCC BAA-680 / CLIP 11262) protein is Glutamate--tRNA ligase.